The following is a 146-amino-acid chain: Large ribosomal subunit protein uL15 (146 aa).

A compositionally biased stretch (basic and acidic residues) spans 1–13 (MKLHELKPAEGSR). Residues 1-48 (MKLHELKPAEGSRKVRNRVGRGIGSGNGKTAGKGHKGQNARSGGGVRL) form a disordered region. Residues 21 to 31 (RGIGSGNGKTA) show a composition bias toward gly residues.

It belongs to the universal ribosomal protein uL15 family. Part of the 50S ribosomal subunit.

In terms of biological role, binds to the 23S rRNA. The sequence is that of Large ribosomal subunit protein uL15 from Bacillus cytotoxicus (strain DSM 22905 / CIP 110041 / 391-98 / NVH 391-98).